Consider the following 124-residue polypeptide: Holo-[acyl-carrier-protein] synthase (124 aa).

Asp8 and Glu55 together coordinate Mg(2+).

This sequence belongs to the P-Pant transferase superfamily. AcpS family. Mg(2+) is required as a cofactor.

The protein resides in the cytoplasm. The catalysed reaction is apo-[ACP] + CoA = holo-[ACP] + adenosine 3',5'-bisphosphate + H(+). In terms of biological role, transfers the 4'-phosphopantetheine moiety from coenzyme A to a Ser of acyl-carrier-protein. This Desulfovibrio desulfuricans (strain ATCC 27774 / DSM 6949 / MB) protein is Holo-[acyl-carrier-protein] synthase.